The primary structure comprises 249 residues: Type III pantothenate kinase (249 aa).

Position 8-15 (8-15) interacts with ATP; it reads DAGNSRLK. Residues Y95 and 102–105 contribute to the substrate site; that span reads GVDR. D104 (proton acceptor) is an active-site residue. A K(+)-binding site is contributed by D125. T128 provides a ligand contact to ATP. Residue T179 coordinates substrate.

The protein belongs to the type III pantothenate kinase family. As to quaternary structure, homodimer. It depends on NH4(+) as a cofactor. K(+) is required as a cofactor.

The protein localises to the cytoplasm. It carries out the reaction (R)-pantothenate + ATP = (R)-4'-phosphopantothenate + ADP + H(+). The protein operates within cofactor biosynthesis; coenzyme A biosynthesis; CoA from (R)-pantothenate: step 1/5. Its function is as follows. Catalyzes the phosphorylation of pantothenate (Pan), the first step in CoA biosynthesis. In Alkalilimnicola ehrlichii (strain ATCC BAA-1101 / DSM 17681 / MLHE-1), this protein is Type III pantothenate kinase.